Here is a 161-residue protein sequence, read N- to C-terminus: Pro-corazonin (161 aa).

An N-terminal signal peptide occupies residues 1–20 (MMRLLLLPLFLFTLSMACMG). A Pyrrolidone carboxylic acid modification is found at Gln21. Asn31 carries the asparagine amide modification. The propeptide occupies 70–161 (LERCLAQLQR…SGEPSVFGKH (92 aa)). Disordered stretches follow at residues 93 to 125 (NANR…TPIQ) and 142 to 161 (VAGS…FGKH). Low complexity predominate over residues 102 to 117 (SDSGSSRNRANNNNEN).

It belongs to the corazonin family.

The protein resides in the secreted. Its function is as follows. Cardioactive peptide. Corazonin is probably involved in the physiological regulation of the heart beat. Clock (Clk) and cycle (cyc) proteins negatively regulate Crz transcription in a cell-specific manner. The sequence is that of Pro-corazonin from Drosophila pseudoobscura pseudoobscura (Fruit fly).